Consider the following 287-residue polypeptide: Short-chain dehydrogenase virD (287 aa).

NADP(+)-binding residues include Val10, Thr36, Asp57, Asn85, Tyr149, Lys153, Val182, and Thr184. Catalysis depends on Tyr149, which acts as the Proton acceptor. Residue Lys153 is the Lowers pKa of active site Tyr of the active site.

It belongs to the short-chain dehydrogenases/reductases (SDR) family.

It functions in the pathway secondary metabolite biosynthesis. Its function is as follows. Short-chain dehydrogenase; part of the gene cluster that mediates the biosynthesis of virensols and trichoxide, fungal natural products that contain or are derived from a salicylaldehyde core. The pathway begins with the synthesis of the reduced chain in virensol C by the highly reducing polyketide synthase virA via condensation of one acetate and 8 malonate units. VirA has interesting programming rules since the first 2 ketides are fully reduced, the 3 following ketides undergo beta-dehydration, and the last 3 ketides are only reduced to beta-hydroxys to yield the trihydroxy portion. The production of aldehyde virensol C by virA alone is surprising, since virA does not contain a reductase (R) domain that is typically associated with reductive product release in HRPKS. The cupin-domain enzyme virC is involved in enhancing virA product turnover. The short-chain dehydrogenase virB then oxidizes the C-7 alcohol of virensol C to a ketone, yielding virensol D. Virensol D is further transformed to salicylaldehyde 5-deoxyaurocitrin by the short-chain dehydrogenase virD. VirD catalyzes the dehydrogenation of C-3 to form the beta-ketone aldehyde, which is followed by the generation of the nucleophilic C-2 that is required for the intramolecular aldol condensation between C-2 and C-7, itself followed by dehydration and aromatization which leads to salicylaldehyde 5-deoxyaurocitrin. While the dehydrogenation of virensol D is definitely catalyzed by virD, the aldol condensation and dehydration may be uncatalyzed or assisted by virD. The short chain dehydrogenase virG then converts salicylaldehyde 5-deoxyaurocitrin into virensol B which is further hydroxylated by the cytochrome P450 monooxygenase virE to yield the hydroquinone virensol A. VirI then may oxidize virensol A to form the quinone, while virH performs the epoxidation. Finally, the two remaining short-chain dehydrogenases, virK and virL, are probably responsible for reducing the ketones to the corresponding alcohols to furnish the epoxycyclohexanol structure in trichoxide. The protein is Short-chain dehydrogenase virD of Hypocrea virens (strain Gv29-8 / FGSC 10586) (Gliocladium virens).